Here is a 145-residue protein sequence, read N- to C-terminus: Large ribosomal subunit protein bL17 (145 aa).

This sequence belongs to the bacterial ribosomal protein bL17 family. Part of the 50S ribosomal subunit. Contacts protein L32.

The polypeptide is Large ribosomal subunit protein bL17 (Orientia tsutsugamushi (strain Boryong) (Rickettsia tsutsugamushi)).